Reading from the N-terminus, the 241-residue chain is SURF1-like protein (241 aa).

Helical transmembrane passes span 5–25 (LTVLITFIILVLLGFWQLNRL) and 199–219 (LEYAFTWFGLAASLVVIYRIY).

The protein belongs to the SURF1 family.

The protein resides in the cell membrane. This is SURF1-like protein from Rickettsia bellii (strain RML369-C).